We begin with the raw amino-acid sequence, 135 residues long: Phosphoinositide-interacting protein (135 aa).

Residues 1 to 21 (MEVLPKALEVDERSPESKDLL) are disordered. The span at 8–19 (LEVDERSPESKD) shows a compositional bias: basic and acidic residues. 2 helical membrane-spanning segments follow: residues 54–74 (IIIM…TCVA) and 92–112 (PAFL…VPII).

In terms of assembly, interacts with TRPV1. In terms of tissue distribution, strongly expressed in most dorsal root ganglia (DRG) and trigeminal neurons. Expressed by most peptidergic (CGRP+) and non-peptidergic (IB4+) DRG neurons. Weakly expressed in other parts of the peripheral nervous system (PNS) including sympathetic and enteric neurons. Not expressed in the spinal cord.

The protein resides in the membrane. In terms of biological role, regulatory subunit of TRPV1, a molecular sensor of noxious heat and capsaicin. Positively regulates TRPV1 channel activity via phosphatidylinositol 4,5-bisphosphate (PIP2). Binds various phosphoinositide, including phosphatidylinositol 4,5-bisphosphate (PIP2), but not phosphatidylinositol (PI). This is Phosphoinositide-interacting protein (Pirt) from Mus musculus (Mouse).